A 426-amino-acid chain; its full sequence is Mitochondrial distribution and morphology protein 12 (426 aa).

The SMP-LTD domain maps to 1–426 (MSIEVDWKTA…VFPSFWTFLI (426 aa)). Disordered stretches follow at residues 88–147 (AHGN…GTPG), 185–264 (WTDH…FRFP), and 346–370 (ADDQETRDKDDHPRSGLDPTTSPKR). Residues 96–109 (THSELNEPPYRDEV) show a composition bias toward basic and acidic residues. Positions 216 to 236 (SSNPTSRPSTSSTLPSHPSGS) are enriched in low complexity. 2 stretches are compositionally biased toward basic and acidic residues: residues 244–264 (SHPEEEHLDDPAEPDHPFRFP) and 349–360 (QETRDKDDHPRS).

Belongs to the MDM12 family. In terms of assembly, component of the ER-mitochondria encounter structure (ERMES) or MDM complex, composed of mmm1, mdm10, mdm12 and mdm34. A mmm1 homodimer associates with one molecule of mdm12 on each side in a pairwise head-to-tail manner, and the SMP-LTD domains of mmm1 and mdm12 generate a continuous hydrophobic tunnel for phospholipid trafficking.

Its subcellular location is the mitochondrion outer membrane. The protein resides in the endoplasmic reticulum membrane. Functionally, component of the ERMES/MDM complex, which serves as a molecular tether to connect the endoplasmic reticulum (ER) and mitochondria. Components of this complex are involved in the control of mitochondrial shape and protein biogenesis, and function in nonvesicular lipid trafficking between the ER and mitochondria. Mdm12 is required for the interaction of the ER-resident membrane protein mmm1 and the outer mitochondrial membrane-resident beta-barrel protein mdm10. The mdm12-mmm1 subcomplex functions in the major beta-barrel assembly pathway that is responsible for biogenesis of all mitochondrial outer membrane beta-barrel proteins, and acts in a late step after the SAM complex. The mdm10-mdm12-mmm1 subcomplex further acts in the TOM40-specific pathway after the action of the mdm12-mmm1 complex. Essential for establishing and maintaining the structure of mitochondria and maintenance of mtDNA nucleoids. The sequence is that of Mitochondrial distribution and morphology protein 12 from Aspergillus terreus (strain NIH 2624 / FGSC A1156).